Here is a 585-residue protein sequence, read N- to C-terminus: Frizzled-5 (585 aa).

Positions methionine 1–alanine 26 are cleaved as a signal peptide. Topologically, residues alanine 27–tryptophan 238 are extracellular. The FZ domain maps to serine 28–tyrosine 150. 5 cysteine pairs are disulfide-bonded: cysteine 33/cysteine 94, cysteine 41/cysteine 87, cysteine 78/cysteine 116, cysteine 105/cysteine 147, and cysteine 109/cysteine 133. Asparagine 47 carries an N-linked (GlcNAc...) asparagine glycan. Asparagine 151 carries N-linked (GlcNAc...) asparagine glycosylation. The tract at residues threonine 156–cysteine 182 is disordered. A helical membrane pass occupies residues isoleucine 239 to isoleucine 259. Residues aspartate 260–proline 270 lie on the Cytoplasmic side of the membrane. The helical transmembrane segment at isoleucine 271–valine 291 threads the bilayer. Residues glycine 292–cysteine 315 are Extracellular-facing. Residues threonine 316–leucine 336 traverse the membrane as a helical segment. At serine 337–glutamine 358 the chain is on the cytoplasmic side. A helical membrane pass occupies residues tyrosine 359–serine 379. The Extracellular segment spans residues serine 380 to glycine 402. Residues phenylalanine 403–phenylalanine 423 traverse the membrane as a helical segment. The Cytoplasmic portion of the chain corresponds to valine 424–arginine 449. A helical membrane pass occupies residues isoleucine 450 to tyrosine 470. Over glutamate 471–tyrosine 500 the chain is Extracellular. Residues tryptophan 501 to isoleucine 521 form a helical membrane-spanning segment. Over tryptophan 522–valine 585 the chain is Cytoplasmic. Residues leucine 582–histidine 584 carry the PDZ-binding motif.

This sequence belongs to the G-protein coupled receptor Fz/Smo family. In terms of assembly, binding of unsaturated fatty acid molecules (via FZ domain) promotes homodimerization (via FZ domain). Interacts with WNT2B. Interacts with WNT7A. Interacts with GOPC. In terms of processing, ubiquitinated by RNF43 and ZNRF3, leading to its degradation by the proteasome. In terms of tissue distribution, detected in hippocampus (at protein level). Expressed in eye, kidney, lung, chondrocytes, epithelial cells of the small intestine and gobelet cells of the colon.

Its subcellular location is the cell membrane. The protein localises to the golgi apparatus membrane. The protein resides in the synapse. It is found in the perikaryon. It localises to the cell projection. Its subcellular location is the dendrite. The protein localises to the axon. Receptor for Wnt proteins. Functions in the canonical Wnt/beta-catenin signaling pathway. In vitro activates WNT2, WNT10B, WNT5A, but not WNT2B or WNT4 signaling. In neurons, activation by WNT7A promotes formation of synapses. May be involved in transduction and intercellular transmission of polarity information during tissue morphogenesis and/or in differentiated tissues. Plays a role in yolk sac angiogenesis and in placental vascularization. Plays a role in ocular development. This is Frizzled-5 (Fzd5) from Mus musculus (Mouse).